We begin with the raw amino-acid sequence, 305 residues long: Acetyl-coenzyme A carboxylase carboxyl transferase subunit beta (305 aa).

Residues 25–294 (VWTKCDSCGQ…PGNDDVEIRS (270 aa)) form the CoA carboxyltransferase N-terminal domain. Zn(2+)-binding residues include Cys29, Cys32, Cys48, and Cys51. Residues 29–51 (CDSCGQVLYRAELERNLGVCPKC) form a C4-type zinc finger. The segment at 281–305 (NHPEPGNDDVEIRSDAPSESSQDDA) is disordered.

Belongs to the AccD/PCCB family. Acetyl-CoA carboxylase is a heterohexamer composed of biotin carboxyl carrier protein (AccB), biotin carboxylase (AccC) and two subunits each of ACCase subunit alpha (AccA) and ACCase subunit beta (AccD). Zn(2+) is required as a cofactor.

The protein resides in the cytoplasm. It carries out the reaction N(6)-carboxybiotinyl-L-lysyl-[protein] + acetyl-CoA = N(6)-biotinyl-L-lysyl-[protein] + malonyl-CoA. It participates in lipid metabolism; malonyl-CoA biosynthesis; malonyl-CoA from acetyl-CoA: step 1/1. In terms of biological role, component of the acetyl coenzyme A carboxylase (ACC) complex. Biotin carboxylase (BC) catalyzes the carboxylation of biotin on its carrier protein (BCCP) and then the CO(2) group is transferred by the transcarboxylase to acetyl-CoA to form malonyl-CoA. The sequence is that of Acetyl-coenzyme A carboxylase carboxyl transferase subunit beta from Pectobacterium atrosepticum (strain SCRI 1043 / ATCC BAA-672) (Erwinia carotovora subsp. atroseptica).